The following is a 300-amino-acid chain: Solute carrier family 25 member 35 (300 aa).

Solcar repeat units lie at residues Met-1 to Arg-90, His-100 to Leu-193, and Gln-203 to Phe-294. Helical transmembrane passes span Thr-38–Gly-58, Leu-59–Ile-79, Gly-91–Leu-119, Ala-169–Ile-190, Trp-205–Pro-225, and Leu-277–Lys-300.

The protein belongs to the mitochondrial carrier (TC 2.A.29) family.

Its subcellular location is the mitochondrion inner membrane. It carries out the reaction a dicarboxylate(in) + sulfate(out) = a dicarboxylate(out) + sulfate(in). Putative antiporter that exchanges dicarboxylates and sulfur oxoanions across the inner membrane of mitochondria. The chain is Solute carrier family 25 member 35 (Slc25a35) from Mus musculus (Mouse).